The chain runs to 273 residues: Eukaryotic translation initiation factor 3 subunit G-2 (273 aa).

Residues 193 to 271 (SAVRISNLSE…LILCVEWSKP (79 aa)) enclose the RRM domain.

It belongs to the eIF-3 subunit G family. As to quaternary structure, component of the eukaryotic translation initiation factor 3 (eIF-3) complex. The eIF-3 complex interacts with pix.

It is found in the cytoplasm. Its function is as follows. RNA-binding component of the eukaryotic translation initiation factor 3 (eIF-3) complex, which is involved in protein synthesis of a specialized repertoire of mRNAs and, together with other initiation factors, stimulates binding of mRNA and methionyl-tRNAi to the 40S ribosome. The eIF-3 complex specifically targets and initiates translation of a subset of mRNAs involved in cell proliferation. This subunit can bind 18S rRNA. The chain is Eukaryotic translation initiation factor 3 subunit G-2 from Drosophila melanogaster (Fruit fly).